The primary structure comprises 87 residues: MAYVKATAILPEKLISEIQKYVQGKTIYIPKPESSHQKWGACSGTRKLIDDRNASIKKAFKNGKTIHQLSDEYHLSIETIKKIVYSK.

This is an uncharacterized protein from Bacillus subtilis (strain 168).